We begin with the raw amino-acid sequence, 174 residues long: Sarcoplasmic calcium-binding protein (174 aa).

At S1 the chain carries N-acetylserine. 4 consecutive EF-hand domains span residues 3–38, 55–90, 91–126, and 127–160; these read LWVQ…FAKE, GVWD…EAKS, VVEG…LGLD, and KTMA…FFMN. Residues D16, D18, D20, and D27 each coordinate Ca(2+). The Ca(2+) site is built by D104, N106, D108, N110, E115, D138, N140, D142, and E149.

Like parvalbumins, SCPs seem to be more abundant in fast contracting muscles, but no functional relationship can be established from this distribution. This chain is Sarcoplasmic calcium-binding protein, found in Hediste diversicolor (Sandworm).